The primary structure comprises 318 residues: 4-hydroxy-3-methylbut-2-enyl diphosphate reductase (318 aa).

Cys12 serves as a coordination point for [4Fe-4S] cluster. The (2E)-4-hydroxy-3-methylbut-2-enyl diphosphate site is built by His41 and His74. Dimethylallyl diphosphate is bound by residues His41 and His74. Residues His41 and His74 each coordinate isopentenyl diphosphate. Cys96 lines the [4Fe-4S] cluster pocket. His124 is a binding site for (2E)-4-hydroxy-3-methylbut-2-enyl diphosphate. Residue His124 coordinates dimethylallyl diphosphate. Residue His124 coordinates isopentenyl diphosphate. The Proton donor role is filled by Glu126. (2E)-4-hydroxy-3-methylbut-2-enyl diphosphate is bound at residue Thr167. Position 197 (Cys197) interacts with [4Fe-4S] cluster. Ser225, Ser226, Asn227, and Ser269 together coordinate (2E)-4-hydroxy-3-methylbut-2-enyl diphosphate. Residues Ser225, Ser226, Asn227, and Ser269 each contribute to the dimethylallyl diphosphate site. Residues Ser225, Ser226, Asn227, and Ser269 each coordinate isopentenyl diphosphate.

The protein belongs to the IspH family. The cofactor is [4Fe-4S] cluster.

The enzyme catalyses isopentenyl diphosphate + 2 oxidized [2Fe-2S]-[ferredoxin] + H2O = (2E)-4-hydroxy-3-methylbut-2-enyl diphosphate + 2 reduced [2Fe-2S]-[ferredoxin] + 2 H(+). It catalyses the reaction dimethylallyl diphosphate + 2 oxidized [2Fe-2S]-[ferredoxin] + H2O = (2E)-4-hydroxy-3-methylbut-2-enyl diphosphate + 2 reduced [2Fe-2S]-[ferredoxin] + 2 H(+). Its pathway is isoprenoid biosynthesis; dimethylallyl diphosphate biosynthesis; dimethylallyl diphosphate from (2E)-4-hydroxy-3-methylbutenyl diphosphate: step 1/1. It functions in the pathway isoprenoid biosynthesis; isopentenyl diphosphate biosynthesis via DXP pathway; isopentenyl diphosphate from 1-deoxy-D-xylulose 5-phosphate: step 6/6. Its function is as follows. Catalyzes the conversion of 1-hydroxy-2-methyl-2-(E)-butenyl 4-diphosphate (HMBPP) into a mixture of isopentenyl diphosphate (IPP) and dimethylallyl diphosphate (DMAPP). Acts in the terminal step of the DOXP/MEP pathway for isoprenoid precursor biosynthesis. The polypeptide is 4-hydroxy-3-methylbut-2-enyl diphosphate reductase (Francisella tularensis subsp. holarctica (strain LVS)).